Reading from the N-terminus, the 206-residue chain is Cytochrome c oxidase assembly factor 8 (206 aa).

The transit peptide at 1 to 39 (MLPCAAGARGRGAMVVLRAGKKTFLPPLCRAFACRGCQL) directs the protein to the mitochondrion.

It belongs to the COA8 family. In terms of processing, N-terminal mitochondrial targeting sequence is cleaved from the mature protein once in the mitochondrion. In normal conditions, the cytoplasmic precursor protein is rapidly degraded by the ubiquitination-proteasome system (UPS). Oxidative stress induces protein stabilization and import into mitochondria where it protects COX from degradation. Expressed in fibroblasts.

It is found in the mitochondrion inner membrane. Its function is as follows. Required for cytochrome c complex (COX) IV assembly and function Protects COX assembly from oxidation-induced degradation, COX being the terminal component of the mitochondrial respiratory chain. This is Cytochrome c oxidase assembly factor 8 from Homo sapiens (Human).